We begin with the raw amino-acid sequence, 350 residues long: UDP-N-acetylenolpyruvoylglucosamine reductase (350 aa).

Residues Val-25–Leu-194 form the FAD-binding PCMH-type domain. Arg-166 is a catalytic residue. Ser-243 acts as the Proton donor in catalysis. Residue Glu-342 is part of the active site.

The protein belongs to the MurB family. FAD serves as cofactor.

The protein resides in the cytoplasm. The enzyme catalyses UDP-N-acetyl-alpha-D-muramate + NADP(+) = UDP-N-acetyl-3-O-(1-carboxyvinyl)-alpha-D-glucosamine + NADPH + H(+). Its pathway is cell wall biogenesis; peptidoglycan biosynthesis. Its function is as follows. Cell wall formation. This Mycobacterium sp. (strain MCS) protein is UDP-N-acetylenolpyruvoylglucosamine reductase.